Reading from the N-terminus, the 623-residue chain is MSMKGQETRGFQSEVKQLLHLMIHSLYSNKEIFLRELISNASDAADKLRFRALSAPELYEGDGELRVRLSFDKDQRTLTIADNGIGMNREEVIENLGTIAKSGTKAFLESIGSDQAKDSQLIGQFGVGFYSAFIVADKVTVRTRAAGAAADQGVFWESIGEGDYTIADVSKEDRGTEITLHLREGEDEYLDAWRLRSVIGKYSDHIALPVEIETKNEEDGTVTWEKINKAQALWTRSKADVTDEEYKEFYKHIAHDFTDPLSWSHNRVEGKQEYTSLLYIPAQAPWDMWNRDHKHGLKLYVQRVFIMDEAEQFMPNYLRFVRGLIDSNDLPLNVSREILQDSRVTQNLRGALTKRVLQMLEKLAKDDAEGYQKFWQQFGLVLKEGPAEDANNKETIAKLLRFASTQSESSAQTVSLEEYVGRMAEGQEKIYYITADSYAAAKSSPHLELFRKKGIEVLLLSDRIDEWMMSYLTEFDGKPFQSVSKADDALDKLADETEEQKAAEKQLEPFVDRVKTLLGDRVKDVRLTHRLTDTPAIVITDADEMSTQMAKLFAAAGQEAPAVKYIFELNPEHALVKRASDVGDNEQFAEWIDLLLDQALLAERGTLEDPNQFIRRMNKLLSA.

The tract at residues 1–336 is a; substrate-binding; that stretch reads MSMKGQETRG…SNDLPLNVSR (336 aa). The segment at 337–551 is b; it reads EILQDSRVTQ…ADEMSTQMAK (215 aa). The interval 552 to 623 is c; it reads LFAAAGQEAP…IRRMNKLLSA (72 aa).

Belongs to the heat shock protein 90 family. In terms of assembly, homodimer.

It is found in the cytoplasm. Functionally, molecular chaperone. Has ATPase activity. The protein is Chaperone protein HtpG of Serratia proteamaculans (strain 568).